A 71-amino-acid polypeptide reads, in one-letter code: Defensin 1 (71 aa).

The N-terminal stretch at 1 to 25 is a signal peptide; that stretch reads KTVAGFCIFFLVLFLAQEGVVKTEA. Intrachain disulfides connect Cys-28–Cys-71, Cys-39–Cys-60, and Cys-45–Cys-65.

The protein belongs to the DEFL family. May form dimers. Post-translationally, not glycosylated. In terms of processing, contains 4 disulfide bonds. Met-61 and Met-63 might be oxidized in some molecules.

Its function is as follows. Probably has antifungal activity. The protein is Defensin 1 of Arachis hypogaea (Peanut).